The following is a 138-amino-acid chain: uncharacterized protein (138 aa).

Disordered stretches follow at residues 1 to 23 (MPESAPSTPPSVNRRHEPEMLSE) and 35 to 83 (ASPS…EDPV). A compositionally biased stretch (acidic residues) spans 60-69 (DEETIPEEDD).

This is an uncharacterized protein from Schizosaccharomyces pombe (strain 972 / ATCC 24843) (Fission yeast).